We begin with the raw amino-acid sequence, 246 residues long: Sulfate transporter CysZ (246 aa).

4 helical membrane-spanning segments follow: residues 24–44 (LFVLIPLTLNLLVFALLIGFA), 69–89 (IVWPLFVLLVLVIVFFTFTMV), 148–168 (LLVLSFVPGVNLIATPLWILF), and 214–234 (LLIPLVNLVMMPAAVAGATLF).

Belongs to the CysZ family.

Its subcellular location is the cell inner membrane. In terms of biological role, high affinity, high specificity proton-dependent sulfate transporter, which mediates sulfate uptake. Provides the sulfur source for the cysteine synthesis pathway. The polypeptide is Sulfate transporter CysZ (Pseudomonas aeruginosa (strain ATCC 15692 / DSM 22644 / CIP 104116 / JCM 14847 / LMG 12228 / 1C / PRS 101 / PAO1)).